The chain runs to 434 residues: 3-phosphoshikimate 1-carboxyvinyltransferase (434 aa).

The 3-phosphoshikimate site is built by Lys-22, Ser-23, and Arg-27. Residue Lys-22 participates in phosphoenolpyruvate binding. Residues Gly-94 and Arg-122 each coordinate phosphoenolpyruvate. Positions 167, 169, 314, and 341 each coordinate 3-phosphoshikimate. Phosphoenolpyruvate is bound at residue Gln-169. Asp-314 serves as the catalytic Proton acceptor. Phosphoenolpyruvate is bound by residues Arg-345 and Arg-391.

It belongs to the EPSP synthase family. Monomer.

It is found in the cytoplasm. It catalyses the reaction 3-phosphoshikimate + phosphoenolpyruvate = 5-O-(1-carboxyvinyl)-3-phosphoshikimate + phosphate. The protein operates within metabolic intermediate biosynthesis; chorismate biosynthesis; chorismate from D-erythrose 4-phosphate and phosphoenolpyruvate: step 6/7. Its function is as follows. Catalyzes the transfer of the enolpyruvyl moiety of phosphoenolpyruvate (PEP) to the 5-hydroxyl of shikimate-3-phosphate (S3P) to produce enolpyruvyl shikimate-3-phosphate and inorganic phosphate. The chain is 3-phosphoshikimate 1-carboxyvinyltransferase from Leuconostoc mesenteroides subsp. mesenteroides (strain ATCC 8293 / DSM 20343 / BCRC 11652 / CCM 1803 / JCM 6124 / NCDO 523 / NBRC 100496 / NCIMB 8023 / NCTC 12954 / NRRL B-1118 / 37Y).